Here is a 323-residue protein sequence, read N- to C-terminus: AA9 family lytic polysaccharide monooxygenase A (323 aa).

Positions 1-19 are cleaved as a signal peptide; the sequence is MKSFISLLGLSFLTCHASA. Cu(2+) contacts are provided by His-20 and His-90. A disulfide bridge links Cys-59 with Cys-175. Residues His-161 and Gln-170 each contribute to the O2 site. Position 172 (Tyr-172) interacts with Cu(2+). Asn-215 carries N-linked (GlcNAc...) asparagine glycosylation. One can recognise a CBM1 domain in the interval 287 to 323; it reads AVVQKFGQCGGQGWTGGTTCVAGSTCTATNAYYSQCL.

The protein belongs to the polysaccharide monooxygenase AA9 family. It depends on Cu(2+) as a cofactor.

The protein localises to the secreted. It carries out the reaction [(1-&gt;4)-beta-D-glucosyl]n+m + reduced acceptor + O2 = 4-dehydro-beta-D-glucosyl-[(1-&gt;4)-beta-D-glucosyl]n-1 + [(1-&gt;4)-beta-D-glucosyl]m + acceptor + H2O.. Functionally, lytic polysaccharide monooxygenase (LPMO) that depolymerizes crystalline and amorphous polysaccharides via the oxidation of scissile alpha- or beta-(1-4)-glycosidic bonds, yielding C1 and C4 oxidation products. Catalysis by LPMOs requires the reduction of the active-site copper from Cu(II) to Cu(I) by a reducing agent and H(2)O(2) or O(2) as a cosubstrate. This chain is AA9 family lytic polysaccharide monooxygenase A, found in Botryotinia fuckeliana (strain B05.10) (Noble rot fungus).